Here is an 81-residue protein sequence, read N- to C-terminus: Photosystem I iron-sulfur center (81 aa).

2 consecutive 4Fe-4S ferredoxin-type domains span residues 2–31 (SHSV…MIPW) and 39–68 (IASA…VRVY). [4Fe-4S] cluster-binding residues include cysteine 11, cysteine 14, cysteine 17, cysteine 21, cysteine 48, cysteine 51, cysteine 54, and cysteine 58.

The eukaryotic PSI reaction center is composed of at least 11 subunits. It depends on [4Fe-4S] cluster as a cofactor.

The protein localises to the plastid. It localises to the chloroplast thylakoid membrane. It catalyses the reaction reduced [plastocyanin] + hnu + oxidized [2Fe-2S]-[ferredoxin] = oxidized [plastocyanin] + reduced [2Fe-2S]-[ferredoxin]. Apoprotein for the two 4Fe-4S centers FA and FB of photosystem I (PSI); essential for photochemical activity. FB is the terminal electron acceptor of PSI, donating electrons to ferredoxin. The C-terminus interacts with PsaA/B/D and helps assemble the protein into the PSI complex. Required for binding of PsaD and PsaE to PSI. PSI is a plastocyanin-ferredoxin oxidoreductase, converting photonic excitation into a charge separation, which transfers an electron from the donor P700 chlorophyll pair to the spectroscopically characterized acceptors A0, A1, FX, FA and FB in turn. This chain is Photosystem I iron-sulfur center, found in Arabis hirsuta (Hairy rock-cress).